A 338-amino-acid polypeptide reads, in one-letter code: Aspartate--ammonia ligase (338 aa).

The protein belongs to the class-II aminoacyl-tRNA synthetase family. AsnA subfamily.

It is found in the cytoplasm. The enzyme catalyses L-aspartate + NH4(+) + ATP = L-asparagine + AMP + diphosphate + H(+). The protein operates within amino-acid biosynthesis; L-asparagine biosynthesis; L-asparagine from L-aspartate (ammonia route): step 1/1. The protein is Aspartate--ammonia ligase of Lactobacillus delbrueckii subsp. bulgaricus (strain ATCC 11842 / DSM 20081 / BCRC 10696 / JCM 1002 / NBRC 13953 / NCIMB 11778 / NCTC 12712 / WDCM 00102 / Lb 14).